Here is a 173-residue protein sequence, read N- to C-terminus: Alpha-crystallin A chain (173 aa).

Residue methionine 1 is modified to N-acetylmethionine. The region spanning 53–164 is the sHSP domain; that stretch reads NFLDSSNSGM…GDRSIPVTRD (112 aa). Histidine 101, glutamate 103, and histidine 108 together coordinate Zn(2+). An intrachain disulfide couples cysteine 132 to cysteine 143. Residues 143 to 173 form a disordered region; that stretch reads CGPKSGGSESGRGDRSIPVTRDDKTNSTPSS. Residues 153–167 show a composition bias toward basic and acidic residues; sequence GRGDRSIPVTRDDKT.

It belongs to the small heat shock protein (HSP20) family. Heteropolymer composed of three CRYAA and one CRYAB subunits. Inter-subunit bridging via zinc ions enhances stability, which is crucial as there is no protein turn over in the lens. Zinc coordination is achieved at least by His-101, Glu-103 and His-108. His-101 and Glu-103 come from the same molecule within the oligomer, while His-108 residue is provided by another molecule. Can also form homodimers and homotetramers (dimers of dimers) which serve as the building blocks of homooligomers. Part of a complex required for lens intermediate filament formation composed of BFSP1, BFSP2 and CRYAA.

The protein localises to the cytoplasm. The protein resides in the nucleus. Contributes to the transparency and refractive index of the lens. May act as a chaperone, preventing aggregation of various proteins under a wide range of stress conditions. This Psalidodon fasciatus (Banded astyanax) protein is Alpha-crystallin A chain (cryaa).